A 456-amino-acid polypeptide reads, in one-letter code: Glycine receptor subunit alpha-4 (456 aa).

The N-terminal stretch at 1–27 (MTTLVPASLFLLLWTLPGKVLLSVALA) is a signal peptide. Residues 28 to 256 (KEDVKSGLKG…KFHLERQMGY (229 aa)) are Extracellular-facing. A glycan (N-linked (GlcNAc...) asparagine) is linked at Asn71. 2 cysteine pairs are disulfide-bonded: Cys171–Cys185 and Cys232–Cys243. 236–241 (YNTGKF) serves as a coordination point for strychnine. Residues 257 to 278 (YLIQMYIPSLLIVILSWVSFWI) form a helical membrane-spanning segment. Residues 279 to 283 (NMDAA) lie on the Cytoplasmic side of the membrane. A helical transmembrane segment spans residues 284–304 (PARVGLGITTVLTMTTQSSGS). The Extracellular segment spans residues 305–315 (RASLPKVSYVK). The chain crosses the membrane as a helical span at residues 316 to 336 (AIDIWMAVCLLFVFAALLEYA). At 337 to 423 (AVNFVSRQHK…YVDRAKRIDT (87 aa)) the chain is on the cytoplasmic side. The helical transmembrane segment at 424 to 444 (ISRAVFPFTFLVFNIFYWVVY) threads the bilayer. Over 445–456 (KVLRSEDIHQAL) the chain is Extracellular.

Belongs to the ligand-gated ion channel (TC 1.A.9) family. Glycine receptor (TC 1.A.9.3) subfamily. GLRA4 sub-subfamily. Homopentamer (in vitro). Heteropentamer composed of GLRA4 and GLRB. As to expression, detected in the retina inner plexiform layer, especially at the border between layer three and four (at protein level).

It is found in the postsynaptic cell membrane. It localises to the synapse. The protein resides in the perikaryon. The protein localises to the cell projection. Its subcellular location is the dendrite. It is found in the cell membrane. The catalysed reaction is chloride(in) = chloride(out). Its activity is regulated as follows. Inhibited by strychnine. Its function is as follows. Glycine receptors are ligand-gated chloride channels. Channel opening is triggered by extracellular glycine. Channel opening is also triggered by taurine and beta-alanine. Plays a role in the down-regulation of neuronal excitability. Contributes to the generation of inhibitory postsynaptic currents. The protein is Glycine receptor subunit alpha-4 (Glra4) of Mus musculus (Mouse).